A 316-amino-acid polypeptide reads, in one-letter code: tRNA selenocysteine 1-associated protein 1-like (316 aa).

2 RRM domains span residues 6–89 and 99–178; these read TSLW…YATY and FSVF…IAVN. The span at 239 to 248 shows a compositional bias: pro residues; that stretch reads PPMGMPPMPP. The segment at 239-285 is disordered; the sequence is PPMGMPPMPPDMQGSTEAHDGTEEVEEDPSEDPNPQVDVEELNRQYM.

The protein belongs to the RRM TRSPAP family.

It is found in the nucleus. The protein localises to the cytoplasm. In terms of biological role, involved in the early steps of selenocysteine biosynthesis and tRNA(Sec) charging to the later steps resulting in the cotranslational incorporation of selenocysteine into selenoproteins. In Danio rerio (Zebrafish), this protein is tRNA selenocysteine 1-associated protein 1-like (trnau1apl).